The primary structure comprises 886 residues: Inter-alpha-trypsin inhibitor heavy chain H3 (886 aa).

Positions 1–18 (MWWPYLVLALLSGLEASG) are cleaved as a signal peptide. Residues 19–30 (FPRSPLRLLGKR) constitute a propeptide that is removed on maturation. Residues 26 to 155 (LLGKRSLPEG…KVTFELTYEE (130 aa)) form the VIT domain. Residue Asn-88 is glycosylated (N-linked (GlcNAc...) asparagine). Residues 279–439 (PKNIVFVIDI…YNFLETMALE (161 aa)) enclose the VWFA domain. The N-linked (GlcNAc...) asparagine glycan is linked to Asn-577. At Asp-646 the chain carries Aspartate 1-(chondroitin 4-sulfate)-ester. Residues 647-886 (PHFIIQVPGK…HTDYIVPSLF (240 aa)) constitute a propeptide that is removed on maturation.

It belongs to the ITIH family. In terms of assembly, I-alpha-I plasma protease inhibitors are assembled from one or two heavy chains (HC) and one light chain, bikunin. Pre-alpha-inhibitor (P-alpha-I) is composed of ITIH3/HC3 and bikunin. Heavy chains are linked to bikunin via chondroitin 4-sulfate esterified to the alpha-carboxyl of the C-terminal aspartate after propeptide cleavage.

Its subcellular location is the secreted. Its function is as follows. May act as a carrier of hyaluronan in serum or as a binding protein between hyaluronan and other matrix protein, including those on cell surfaces in tissues to regulate the localization, synthesis and degradation of hyaluronan which are essential to cells undergoing biological processes. The protein is Inter-alpha-trypsin inhibitor heavy chain H3 (ITIH3) of Mesocricetus auratus (Golden hamster).